We begin with the raw amino-acid sequence, 168 residues long: Large ribosomal subunit protein bL9 (168 aa).

The segment at 148–168 (ENGEGSVQPAAEAAEVASTEA) is disordered. Low complexity predominate over residues 157–168 (AAEAAEVASTEA).

The protein belongs to the bacterial ribosomal protein bL9 family.

In terms of biological role, binds to the 23S rRNA. This Herpetosiphon aurantiacus (strain ATCC 23779 / DSM 785 / 114-95) protein is Large ribosomal subunit protein bL9.